The following is an 81-amino-acid chain: MDREEILQKIQEITADRLGVDESEVTPEASFREDLEADSLDLVELIMELEEAFGMEIPDEEAEKITTVEEAVDYVVEHQTA.

One can recognise a Carrier domain in the interval 1–79 (MDREEILQKI…EAVDYVVEHQ (79 aa)). Position 39 is an O-(pantetheine 4'-phosphoryl)serine (serine 39).

The protein belongs to the acyl carrier protein (ACP) family. In terms of processing, 4'-phosphopantetheine is transferred from CoA to a specific serine of apo-ACP by AcpS. This modification is essential for activity because fatty acids are bound in thioester linkage to the sulfhydryl of the prosthetic group.

Its subcellular location is the cytoplasm. The protein operates within lipid metabolism; fatty acid biosynthesis. Carrier of the growing fatty acid chain in fatty acid biosynthesis. The chain is Acyl carrier protein from Rubrobacter xylanophilus (strain DSM 9941 / JCM 11954 / NBRC 16129 / PRD-1).